The sequence spans 280 residues: Eukaryotic translation initiation factor 3 subunit F-1 (280 aa).

Positions 8-138 (VRVHPVVLFQ…LRAYVCIQLG (131 aa)) constitute an MPN domain.

Belongs to the eIF-3 subunit F family. Component of the eukaryotic translation initiation factor 3 (eIF-3) complex. The eIF-3 complex interacts with pix.

It is found in the cytoplasm. Component of the eukaryotic translation initiation factor 3 (eIF-3) complex, which is involved in protein synthesis of a specialized repertoire of mRNAs and, together with other initiation factors, stimulates binding of mRNA and methionyl-tRNAi to the 40S ribosome. The eIF-3 complex specifically targets and initiates translation of a subset of mRNAs involved in cell proliferation. The sequence is that of Eukaryotic translation initiation factor 3 subunit F-1 from Drosophila ananassae (Fruit fly).